The primary structure comprises 194 residues: KLMALQLLLWHSALWMVQEATPLGPTSSLPQSFLLKCLEQVRKVQADGTALQERLCAAHKLCHPEELVLLGHALGIPQAPLSSCSSQALQLTGCLRQLHSGLFLYQGLLQALAGISPELAPTLDMLQLDITDFAINIWQQMEDVGMAPAVPPTQGTMPTFTSAFQRRAGGTLVASNLQSFLEVAYRALRHFTKP.

Residues 1–20 (KLMALQLLLWHSALWMVQEA) form the signal peptide. 2 disulfides stabilise this stretch: cysteine 56–cysteine 62 and cysteine 84–cysteine 94. Threonine 153 carries O-linked (GalNAc...) threonine glycosylation.

It belongs to the IL-6 superfamily. As to quaternary structure, monomer. Post-translationally, O-glycosylated.

The protein localises to the secreted. Granulocyte/macrophage colony-stimulating factors are cytokines that act in hematopoiesis by controlling the production, differentiation, and function of 2 related white cell populations of the blood, the granulocytes and the monocytes-macrophages. This CSF induces granulocytes. This chain is Granulocyte colony-stimulating factor (CSF3), found in Felis catus (Cat).